A 250-amino-acid chain; its full sequence is Protein lin-28 homolog B (250 aa).

Disordered regions lie at residues 1 to 27 (MAEA…ESPL) and 98 to 126 (RVTG…KPKG). The segment covering 9–18 (GGEEPGRLPE) has biased composition (basic and acidic residues). Residues 29-102 (HGAGHCKWFN…GLESIRVTGP (74 aa)) form the CSD domain. Residues 114-125 (PKGKTVQKRKPK) show a composition bias toward basic residues. 2 consecutive CCHC-type zinc fingers follow at residues 127-144 (DRCY…ECSL) and 149-166 (KKCH…NCPH). Zn(2+) is bound by residues C129, C132, H137, C142, C151, C154, H159, and C164. The tract at residues 165–250 (PHKTVSQQPT…GPSVQKRKKT (86 aa)) is disordered. Positions 168-177 (TVSQQPTSSQ) are enriched in polar residues. Low complexity predominate over residues 200–209 (GYSSPSYSQE). Basic and acidic residues predominate over residues 210–219 (GRSEISERSG).

It belongs to the lin-28 family.

The protein resides in the nucleus. The protein localises to the nucleolus. In terms of biological role, suppressor of specific microRNA (miRNA) biogenesis. Binds target primary miRNA transcripts and sequester them in the nucleolus, away from the microprocessor complex, hence preventing their processing into mature miRNA. The specific interaction with target pri-miRNAs occurs via an 5'-GGAG-3' motif in the pre-miRNA terminal loop. The polypeptide is Protein lin-28 homolog B (LIN28B) (Gallus gallus (Chicken)).